The primary structure comprises 763 residues: Fibroblast growth factor receptor (763 aa).

The N-terminal stretch at 1 to 27 (MKEFEVKVASTAFVLVLFSLTINQILA) is a signal peptide. The Extracellular segment spans residues 28-291 (SETSTKFRSP…ITKGIPNETN (264 aa)). Residues 34–74 (FRSPVPAPTVPDWNHLPNEGNEENVVSAPKQDGASGGQKPY) form a disordered region. Ig-like C2-type domains follow at residues 73–164 (PYWT…YQLD) and 173–270 (PILA…AWLS). Residues C98 and C148 are joined by a disulfide bond. 6 N-linked (GlcNAc...) asparagine glycosylation sites follow: N158, N182, N220, N230, N243, and N288. A disulfide bridge links C195 with C254. The helical transmembrane segment at 292–312 (IIIYVMCGVLVILFGLAVVLV) threads the bilayer. The Cytoplasmic segment spans residues 313–763 (LYYHCYNGKD…NEHARLRSEA (451 aa)). The 291-residue stretch at 382-672 (ITLVERLDEG…TLVEDLDRML (291 aa)) folds into the Protein kinase domain. ATP contacts are provided by residues 388–396 (LDEGFFGQV) and K417. The active-site Proton acceptor is the D537. Y568 bears the Phosphotyrosine; by autocatalysis mark. Over residues 691–711 (YSESSEDESESQNSDEEDDDS) the composition is skewed to acidic residues. The interval 691-742 (YSESSEDESESQNSDEEDDDSVFERMRQIDSLSNGNIPFNEEDSSNSDPYVA) is disordered.

It belongs to the protein kinase superfamily. Tyr protein kinase family. Fibroblast growth factor receptor subfamily.

It is found in the membrane. The catalysed reaction is L-tyrosyl-[protein] + ATP = O-phospho-L-tyrosyl-[protein] + ADP + H(+). Functionally, receptor for basic fibroblast growth factor. The protein is Fibroblast growth factor receptor (FGFR) of Halocynthia roretzi (Sea squirt).